The following is a 91-amino-acid chain: Small ubiquitin-related modifier (91 aa).

In terms of domain architecture, Ubiquitin-like spans 13–91; it reads EYIKIKVVGQ…EVYQEQLGGF (79 aa). G90 is covalently cross-linked (Glycyl lysine isopeptide (Gly-Lys) (interchain with K-? in acceptor proteins)). A propeptide is located at residue F91.

This sequence belongs to the ubiquitin family. SUMO subfamily. In terms of assembly, covalently attached to tbx-2. Covalently attached to lin-1. Covalently attached to lin-11. Covalently attached to sop-2. Covalently attached to bet-1. In terms of processing, cleavage of precursor form by ulp-1 is necessary for function.

The protein localises to the cytoplasm. Its subcellular location is the nucleus. It is found in the cytoskeleton. The protein resides in the spindle. It localises to the chromosome. The protein localises to the microtubule organizing center. Its subcellular location is the centrosome. Functionally, ubiquitin-like protein which can be covalently attached to target lysines as a monomer. Does not seem to be involved in protein degradation and may function as an antagonist of ubiquitin in the degradation process. Plays a role in a number of cellular processes such as nuclear transport, DNA replication and repair, mitosis and signal transduction. Covalent attachment to its substrates requires prior activation by the E1 complex aos-1-uba-2 and linkage to the E2 enzyme ubc-9, and can be promoted by an E3 ligase such as gei-17. Required for embryonic development, fertility, vulval morphogenesis and inhibition of vulval cell fates. Probably by sumoylating bet-1, prevents muscle myosin depletion in aging adults probably by preventing myoblast growth factor receptor egl-15 overexpression. Plays a role in the attenuation of the let-60/ras pathway. Plays a role in male tail tip morphogenesis. Plays a role in the mitochondrial stress response with its covalent attachment to transcription factors dve-1 and afts-1 negatively regulating the mitochondrial unfolded protein response. The polypeptide is Small ubiquitin-related modifier (Caenorhabditis elegans).